A 566-amino-acid polypeptide reads, in one-letter code: Oxygen-dependent choline dehydrogenase (566 aa).

7 to 36 (DYIICGAGSAGNVLATRLTEDPNVTVLLLE) is a binding site for FAD. Positions 180 to 203 (NGYQQEGFGPMDRTVTPKGRRAST) are disordered. Histidine 474 (proton acceptor) is an active-site residue.

It belongs to the GMC oxidoreductase family. FAD serves as cofactor.

It catalyses the reaction choline + A = betaine aldehyde + AH2. The catalysed reaction is betaine aldehyde + NAD(+) + H2O = glycine betaine + NADH + 2 H(+). Its pathway is amine and polyamine biosynthesis; betaine biosynthesis via choline pathway; betaine aldehyde from choline (cytochrome c reductase route): step 1/1. Its function is as follows. Involved in the biosynthesis of the osmoprotectant glycine betaine. Catalyzes the oxidation of choline to betaine aldehyde and betaine aldehyde to glycine betaine at the same rate. The protein is Oxygen-dependent choline dehydrogenase of Burkholderia ambifaria (strain MC40-6).